Here is a 166-residue protein sequence, read N- to C-terminus: NADPH-dependent 7-cyano-7-deazaguanine reductase (166 aa).

The active-site Thioimide intermediate is Cys57. Catalysis depends on Asp64, which acts as the Proton donor. Substrate is bound by residues 79–81 (VES) and 98–99 (HE).

It belongs to the GTP cyclohydrolase I family. QueF type 1 subfamily.

Its subcellular location is the cytoplasm. It carries out the reaction 7-aminomethyl-7-carbaguanine + 2 NADP(+) = 7-cyano-7-deazaguanine + 2 NADPH + 3 H(+). The protein operates within tRNA modification; tRNA-queuosine biosynthesis. Catalyzes the NADPH-dependent reduction of 7-cyano-7-deazaguanine (preQ0) to 7-aminomethyl-7-deazaguanine (preQ1). This chain is NADPH-dependent 7-cyano-7-deazaguanine reductase, found in Staphylococcus haemolyticus (strain JCSC1435).